The sequence spans 503 residues: Aromatase (503 aa).

3 consecutive transmembrane segments (helical) span residues 19 to 39 (EVMP…LLVW), 51 to 71 (GYCM…MGIG), and 303 to 323 (MLIA…FLIA). 2 residues coordinate substrate: Asp309 and Met374. Cys437 provides a ligand contact to heme.

This sequence belongs to the cytochrome P450 family. Requires heme as cofactor.

The protein resides in the endoplasmic reticulum membrane. It localises to the microsome membrane. It catalyses the reaction testosterone + 3 reduced [NADPH--hemoprotein reductase] + 3 O2 = 17beta-estradiol + formate + 3 oxidized [NADPH--hemoprotein reductase] + 4 H2O + 4 H(+). The enzyme catalyses androst-4-ene-3,17-dione + 3 reduced [NADPH--hemoprotein reductase] + 3 O2 = estrone + formate + 3 oxidized [NADPH--hemoprotein reductase] + 4 H2O + 4 H(+). It carries out the reaction androst-4-ene-3,17-dione + reduced [NADPH--hemoprotein reductase] + O2 = 19-hydroxyandrost-4-ene-3,17-dione + oxidized [NADPH--hemoprotein reductase] + H2O + H(+). The catalysed reaction is 19-hydroxyandrost-4-ene-3,17-dione + reduced [NADPH--hemoprotein reductase] + O2 = 19-oxo-androst-4-ene-3,17-dione + oxidized [NADPH--hemoprotein reductase] + 2 H2O + H(+). It catalyses the reaction 19-oxo-androst-4-ene-3,17-dione + reduced [NADPH--hemoprotein reductase] + O2 = estrone + formate + oxidized [NADPH--hemoprotein reductase] + H2O + 2 H(+). The enzyme catalyses estrone + reduced [NADPH--hemoprotein reductase] + O2 = 2-hydroxyestrone + oxidized [NADPH--hemoprotein reductase] + H2O + H(+). It carries out the reaction 17beta-hydroxy-5alpha-androstan-3-one + reduced [NADPH--hemoprotein reductase] + O2 = 17beta,19-dihydroxy-3-oxo-5alpha-androstanone + oxidized [NADPH--hemoprotein reductase] + H2O + H(+). The catalysed reaction is 17beta,19-dihydroxy-3-oxo-5alpha-androstanone + reduced [NADPH--hemoprotein reductase] + O2 = 17beta-hydroxy-3,19-dioxo-5alpha-androstanone + oxidized [NADPH--hemoprotein reductase] + 2 H2O + H(+). It catalyses the reaction 17beta-hydroxy-3,19-dioxo-5alpha-androstanone + reduced [NADPH--hemoprotein reductase] + O2 = 17beta-hydroxy-3-oxo-19-nor-5alpha-androst-1-ene + formate + oxidized [NADPH--hemoprotein reductase] + H2O + 2 H(+). The protein operates within steroid hormone biosynthesis. In terms of biological role, a cytochrome P450 monooxygenase that catalyzes the conversion of C19 androgens, androst-4-ene-3,17-dione (androstenedione) and testosterone to the C18 estrogens, estrone and estradiol, respectively. Catalyzes three successive oxidations of C19 androgens: two conventional oxidations at C19 yielding 19-hydroxy and 19-oxo/19-aldehyde derivatives, followed by a third oxidative aromatization step that involves C1-beta hydrogen abstraction combined with cleavage of the C10-C19 bond to yield a phenolic A ring and formic acid. Alternatively, the third oxidative reaction yields a 19-norsteroid and formic acid. Converts dihydrotestosterone to delta1,10-dehydro 19-nordihydrotestosterone and may play a role in homeostasis of this potent androgen. Also displays 2-hydroxylase activity toward estrone. Mechanistically, uses molecular oxygen inserting one oxygen atom into a substrate, and reducing the second into a water molecule, with two electrons provided by NADPH via cytochrome P450 reductase (CPR; NADPH-ferrihemoprotein reductase). This Canis lupus familiaris (Dog) protein is Aromatase (CYP19A1).